Reading from the N-terminus, the 467-residue chain is Ribosomal protein uS12 methylthiotransferase RimO (467 aa).

One can recognise an MTTase N-terminal domain in the interval 1 to 110 (MDLHGCAKNQ…LPQLIDSMFP (110 aa)). Residues cysteine 6, cysteine 42, cysteine 73, cysteine 153, cysteine 157, and cysteine 160 each coordinate [4Fe-4S] cluster. Residues 139–386 (LNFPRSTYIK…QNAQTSITEK (248 aa)) form the Radical SAM core domain. One can recognise a TRAM domain in the interval 389–467 (DSFIGKEIEV…NGFDLEAVAV (79 aa)).

This sequence belongs to the methylthiotransferase family. RimO subfamily. It depends on [4Fe-4S] cluster as a cofactor.

The protein localises to the cytoplasm. The enzyme catalyses L-aspartate(89)-[ribosomal protein uS12]-hydrogen + (sulfur carrier)-SH + AH2 + 2 S-adenosyl-L-methionine = 3-methylsulfanyl-L-aspartate(89)-[ribosomal protein uS12]-hydrogen + (sulfur carrier)-H + 5'-deoxyadenosine + L-methionine + A + S-adenosyl-L-homocysteine + 2 H(+). Its function is as follows. Catalyzes the methylthiolation of an aspartic acid residue of ribosomal protein uS12. This Treponema denticola (strain ATCC 35405 / DSM 14222 / CIP 103919 / JCM 8153 / KCTC 15104) protein is Ribosomal protein uS12 methylthiotransferase RimO.